We begin with the raw amino-acid sequence, 274 residues long: NH(3)-dependent NAD(+) synthetase (274 aa).

46 to 53 contacts ATP; that stretch reads GISGGQDS. Residue D52 participates in Mg(2+) binding. R140 contributes to the deamido-NAD(+) binding site. T160 serves as a coordination point for ATP. Residue E165 coordinates Mg(2+). K173 and D180 together coordinate deamido-NAD(+). The ATP site is built by K189 and T211. 260-261 provides a ligand contact to deamido-NAD(+); sequence HK.

This sequence belongs to the NAD synthetase family. In terms of assembly, homodimer.

It catalyses the reaction deamido-NAD(+) + NH4(+) + ATP = AMP + diphosphate + NAD(+) + H(+). Its pathway is cofactor biosynthesis; NAD(+) biosynthesis; NAD(+) from deamido-NAD(+) (ammonia route): step 1/1. Functionally, catalyzes the ATP-dependent amidation of deamido-NAD to form NAD. Uses ammonia as a nitrogen source. The chain is NH(3)-dependent NAD(+) synthetase from Streptococcus pneumoniae (strain Hungary19A-6).